Consider the following 101-residue polypeptide: Protein RALF-like 14 (101 aa).

Positions 1–21 (MKLLIFAVIISVVLFPVLVSS) are cleaved as a signal peptide. The propeptide at 22-56 (RTIKCDQLSGKCINGEEKEIMNMRLGLDVSSRRIL) is removed in mature form. Cysteines 90 and 96 form a disulfide.

The protein belongs to the plant rapid alkalinization factor (RALF) family. In terms of processing, proteolytically cleaved, probably by S1P, a subtilisin-like serine protease (subtilase).

It localises to the secreted. In terms of biological role, cell signaling peptide that may regulate plant stress, growth, and development. Mediates a rapid alkalinization of extracellular space by mediating a transient increase in the cytoplasmic Ca(2+) concentration leading to a calcium-dependent signaling events through a cell surface receptor and a concomitant activation of some intracellular mitogen-activated protein kinases. In Arabidopsis thaliana (Mouse-ear cress), this protein is Protein RALF-like 14 (RALFL14).